A 227-amino-acid chain; its full sequence is ATP-dependent dethiobiotin synthetase BioD (227 aa).

ATP is bound at residue 13 to 18 (DIGKTY). A Mg(2+)-binding site is contributed by T17. K38 is an active-site residue. Position 42 (S42) interacts with substrate. Residues D55, 116–119 (EGSG), and 179–180 (NN) each bind ATP. Mg(2+)-binding residues include D55 and E116.

The protein belongs to the dethiobiotin synthetase family. Homodimer. The cofactor is Mg(2+).

Its subcellular location is the cytoplasm. It carries out the reaction (7R,8S)-7,8-diammoniononanoate + CO2 + ATP = (4R,5S)-dethiobiotin + ADP + phosphate + 3 H(+). Its pathway is cofactor biosynthesis; biotin biosynthesis; biotin from 7,8-diaminononanoate: step 1/2. Functionally, catalyzes a mechanistically unusual reaction, the ATP-dependent insertion of CO2 between the N7 and N8 nitrogen atoms of 7,8-diaminopelargonic acid (DAPA, also called 7,8-diammoniononanoate) to form a ureido ring. The chain is ATP-dependent dethiobiotin synthetase BioD from Clostridium botulinum (strain Okra / Type B1).